A 296-amino-acid chain; its full sequence is MLLGSHVSMSGKKMLEGSAIEAYEYGETTFMIYTGAPQNTRRKSIEDLNITKGHEVMEKYGLSNIVVHAPYIINIANTTKPETFNLGVDFLQQEIERTQAIGAKDIVLHPGAHVGAGVDAGINKIIEGLNEVLTNDNNVRIALETMAGKGTEIGRSFEELARIIDGVHNNERLSVCFDTCHTHDAGYNVKEDFDGVLNEFDKIIGVDRIKVVHVNDSKNDRGAQKDRHENIGFGYIGFDALNYIVHHDSFKDIPKILETPYVGEDKKNKKPPYKLEIEMLKQQQFDPELKNKVMQQ.

Zn(2+) contacts are provided by histidine 68, histidine 109, glutamate 144, aspartate 178, histidine 181, histidine 213, aspartate 226, histidine 228, and glutamate 258.

Belongs to the AP endonuclease 2 family. Zn(2+) is required as a cofactor.

The catalysed reaction is Endonucleolytic cleavage to 5'-phosphooligonucleotide end-products.. Its function is as follows. Endonuclease IV plays a role in DNA repair. It cleaves phosphodiester bonds at apurinic or apyrimidinic (AP) sites, generating a 3'-hydroxyl group and a 5'-terminal sugar phosphate. The sequence is that of Probable endonuclease 4 from Staphylococcus aureus (strain Mu3 / ATCC 700698).